The chain runs to 358 residues: Cholesterol galactosyltransferase (358 aa).

Belongs to the glycosyltransferase 2 family.

It carries out the reaction cholesterol + UDP-alpha-D-galactose = cholesteryl 3-beta-D-galactoside + UDP + H(+). The protein operates within glycolipid biosynthesis. In terms of biological role, galactosyltransferase involved in the synthesis of cholesterol glycolipids, which are formed by the use of host-derived cholesterol and have been shown to be immunogenic, and possibly contribute to Lyme disease pathogenesis. Catalyzes the formation of cholesteryl beta-D-galactopyranoside (CGal) from cholesterol and UDP-alpha-D-galactose. Cannot use GDP-mannose. This is Cholesterol galactosyltransferase from Borreliella burgdorferi (strain ATCC 35210 / DSM 4680 / CIP 102532 / B31) (Borrelia burgdorferi).